A 375-amino-acid chain; its full sequence is Chaperone protein DnaJ (375 aa).

Residues 5-69 enclose the J domain; that stretch reads DYYEVLGVGK…QKRAHYDQFG (65 aa). The CR-type zinc finger occupies 132–214; that stretch reads GKETTIEIPR…CGGTGKVKKR (83 aa). C145, C148, C162, C165, C188, C191, C202, and C205 together coordinate Zn(2+). CXXCXGXG motif repeat units follow at residues 145 to 152, 162 to 169, 188 to 195, and 202 to 209; these read CETCSGSG, CSHCGGSG, CHYCNGTG, and CSTCGGTG.

The protein belongs to the DnaJ family. In terms of assembly, homodimer. The cofactor is Zn(2+).

Its subcellular location is the cytoplasm. In terms of biological role, participates actively in the response to hyperosmotic and heat shock by preventing the aggregation of stress-denatured proteins and by disaggregating proteins, also in an autonomous, DnaK-independent fashion. Unfolded proteins bind initially to DnaJ; upon interaction with the DnaJ-bound protein, DnaK hydrolyzes its bound ATP, resulting in the formation of a stable complex. GrpE releases ADP from DnaK; ATP binding to DnaK triggers the release of the substrate protein, thus completing the reaction cycle. Several rounds of ATP-dependent interactions between DnaJ, DnaK and GrpE are required for fully efficient folding. Also involved, together with DnaK and GrpE, in the DNA replication of plasmids through activation of initiation proteins. This chain is Chaperone protein DnaJ, found in Bacillus licheniformis (strain ATCC 14580 / DSM 13 / JCM 2505 / CCUG 7422 / NBRC 12200 / NCIMB 9375 / NCTC 10341 / NRRL NRS-1264 / Gibson 46).